The primary structure comprises 352 residues: Molybdenum import ATP-binding protein ModC (352 aa).

An ABC transporter domain is found at Met-1–Asp-229. Residue Gly-31–Thr-38 coordinates ATP. The 64-residue stretch at Lys-289–Ala-352 folds into the Mop domain.

The protein belongs to the ABC transporter superfamily. Molybdate importer (TC 3.A.1.8) family. The complex is composed of two ATP-binding proteins (ModC), two transmembrane proteins (ModB) and a solute-binding protein (ModA).

It localises to the cell inner membrane. The catalysed reaction is molybdate(out) + ATP + H2O = molybdate(in) + ADP + phosphate + H(+). Functionally, part of the ABC transporter complex ModABC involved in molybdenum import. Responsible for energy coupling to the transport system. The sequence is that of Molybdenum import ATP-binding protein ModC from Pectobacterium atrosepticum (strain SCRI 1043 / ATCC BAA-672) (Erwinia carotovora subsp. atroseptica).